The following is a 519-amino-acid chain: Bifunctional purine biosynthesis protein PurH (519 aa).

The MGS-like domain maps to 1-147; it reads MAKITRALIS…KNNHDVTVLV (147 aa).

The protein belongs to the PurH family.

The catalysed reaction is (6R)-10-formyltetrahydrofolate + 5-amino-1-(5-phospho-beta-D-ribosyl)imidazole-4-carboxamide = 5-formamido-1-(5-phospho-D-ribosyl)imidazole-4-carboxamide + (6S)-5,6,7,8-tetrahydrofolate. It catalyses the reaction IMP + H2O = 5-formamido-1-(5-phospho-D-ribosyl)imidazole-4-carboxamide. It participates in purine metabolism; IMP biosynthesis via de novo pathway; 5-formamido-1-(5-phospho-D-ribosyl)imidazole-4-carboxamide from 5-amino-1-(5-phospho-D-ribosyl)imidazole-4-carboxamide (10-formyl THF route): step 1/1. The protein operates within purine metabolism; IMP biosynthesis via de novo pathway; IMP from 5-formamido-1-(5-phospho-D-ribosyl)imidazole-4-carboxamide: step 1/1. The sequence is that of Bifunctional purine biosynthesis protein PurH from Trichlorobacter lovleyi (strain ATCC BAA-1151 / DSM 17278 / SZ) (Geobacter lovleyi).